Consider the following 197-residue polypeptide: MKIIVLASTSPYRMQLMRQLGLPFHVAAPQYQEQIDQEIAPELLVKHQAAGKAKSLAQKYPDALIIGSDQVFVDASGRVLGKPDSLEGAVRQLRGMAGKSHTFYTGLSVYDSNRDETLTGFATYRVTLRALTEQEIRCYLQRENPLDCAGSFKVEGLGIALMQRLEGDDYTTLIGLPLIKLVDFLGHFGVRVLGDQA.

D69 (proton acceptor) is an active-site residue.

It belongs to the Maf family. YceF subfamily. It depends on a divalent metal cation as a cofactor.

It is found in the cytoplasm. It carries out the reaction N(7)-methyl-GTP + H2O = N(7)-methyl-GMP + diphosphate + H(+). Functionally, nucleoside triphosphate pyrophosphatase that hydrolyzes 7-methyl-GTP (m(7)GTP). May have a dual role in cell division arrest and in preventing the incorporation of modified nucleotides into cellular nucleic acids. This is 7-methyl-GTP pyrophosphatase from Syntrophotalea carbinolica (strain DSM 2380 / NBRC 103641 / GraBd1) (Pelobacter carbinolicus).